The primary structure comprises 119 residues: NAD(P)H-quinone oxidoreductase subunit M (119 aa).

This sequence belongs to the complex I NdhM subunit family. NDH-1 can be composed of about 15 different subunits; different subcomplexes with different compositions have been identified which probably have different functions.

It is found in the cellular thylakoid membrane. It catalyses the reaction a plastoquinone + NADH + (n+1) H(+)(in) = a plastoquinol + NAD(+) + n H(+)(out). The enzyme catalyses a plastoquinone + NADPH + (n+1) H(+)(in) = a plastoquinol + NADP(+) + n H(+)(out). NDH-1 shuttles electrons from an unknown electron donor, via FMN and iron-sulfur (Fe-S) centers, to quinones in the respiratory and/or the photosynthetic chain. The immediate electron acceptor for the enzyme in this species is believed to be plastoquinone. Couples the redox reaction to proton translocation, and thus conserves the redox energy in a proton gradient. Cyanobacterial NDH-1 also plays a role in inorganic carbon-concentration. The polypeptide is NAD(P)H-quinone oxidoreductase subunit M (Gloeothece citriformis (strain PCC 7424) (Cyanothece sp. (strain PCC 7424))).